A 741-amino-acid polypeptide reads, in one-letter code: Methionine--tRNA ligase (741 aa).

The short motif at 11–21 (PYANGPIHAGH) is the 'HIGH' region element. 4 residues coordinate Zn(2+): Cys143, Cys146, Cys156, and Cys159. The 'KMSKS' region motif lies at 345–349 (KFSTS). Thr348 contacts ATP. In terms of domain architecture, tRNA-binding spans 641 to 741 (EFAKLDLRVG…KEVKLGARIR (101 aa)).

The protein belongs to the class-I aminoacyl-tRNA synthetase family. MetG type 1 subfamily. Homodimer. Zn(2+) serves as cofactor.

Its subcellular location is the cytoplasm. The enzyme catalyses tRNA(Met) + L-methionine + ATP = L-methionyl-tRNA(Met) + AMP + diphosphate. Functionally, is required not only for elongation of protein synthesis but also for the initiation of all mRNA translation through initiator tRNA(fMet) aminoacylation. In Thermococcus kodakarensis (strain ATCC BAA-918 / JCM 12380 / KOD1) (Pyrococcus kodakaraensis (strain KOD1)), this protein is Methionine--tRNA ligase.